Consider the following 195-residue polypeptide: Probable nicotinate-nucleotide adenylyltransferase (195 aa).

The protein belongs to the NadD family.

The catalysed reaction is nicotinate beta-D-ribonucleotide + ATP + H(+) = deamido-NAD(+) + diphosphate. It functions in the pathway cofactor biosynthesis; NAD(+) biosynthesis; deamido-NAD(+) from nicotinate D-ribonucleotide: step 1/1. Functionally, catalyzes the reversible adenylation of nicotinate mononucleotide (NaMN) to nicotinic acid adenine dinucleotide (NaAD). The protein is Probable nicotinate-nucleotide adenylyltransferase of Chlorobaculum parvum (strain DSM 263 / NCIMB 8327) (Chlorobium vibrioforme subsp. thiosulfatophilum).